A 303-amino-acid chain; its full sequence is 1D-myo-inositol 2-acetamido-2-deoxy-alpha-D-glucopyranoside deacetylase 1 (303 aa).

The Zn(2+) site is built by H15, D18, and H157.

It belongs to the MshB deacetylase family. Requires Zn(2+) as cofactor.

It catalyses the reaction 1D-myo-inositol 2-acetamido-2-deoxy-alpha-D-glucopyranoside + H2O = 1D-myo-inositol 2-amino-2-deoxy-alpha-D-glucopyranoside + acetate. Its function is as follows. Catalyzes the deacetylation of 1D-myo-inositol 2-acetamido-2-deoxy-alpha-D-glucopyranoside (GlcNAc-Ins) in the mycothiol biosynthesis pathway. In Saccharopolyspora erythraea (strain ATCC 11635 / DSM 40517 / JCM 4748 / NBRC 13426 / NCIMB 8594 / NRRL 2338), this protein is 1D-myo-inositol 2-acetamido-2-deoxy-alpha-D-glucopyranoside deacetylase 1.